We begin with the raw amino-acid sequence, 254 residues long: Ankyrin repeat domain-containing protein 7 (254 aa).

ANK repeat units lie at residues 58-87 (KYRT…KINV), 91-120 (ENKS…DPDL), 124-153 (RYNT…DLEA), 157-186 (DGYT…DVNA), and 190-219 (YQRT…ELCY).

In terms of tissue distribution, testis specific.

The polypeptide is Ankyrin repeat domain-containing protein 7 (ANKRD7) (Homo sapiens (Human)).